The following is a 678-amino-acid chain: uncharacterized protein (678 aa).

2 disordered regions span residues 123–156 and 381–417; these read TPLS…TDSV and TETT…TEHS.

The protein resides in the cytoplasm. This is an uncharacterized protein from Schizosaccharomyces pombe (strain 972 / ATCC 24843) (Fission yeast).